The sequence spans 479 residues: 6-phosphogluconate dehydrogenase, decarboxylating (479 aa).

NADP(+) contacts are provided by residues Gly-9 to Gly-14, Asn-32 to Thr-34, Ile-74 to Ala-76, and Asn-102. Residues Asn-102 and Ser-128–Gly-130 each bind substrate. Lys-182 functions as the Proton acceptor in the catalytic mechanism. His-185–Asn-186 is a substrate binding site. Glu-189 acts as the Proton donor in catalysis. Positions 190, 259, 286, 446, and 452 each coordinate substrate.

It belongs to the 6-phosphogluconate dehydrogenase family. As to quaternary structure, homodimer.

The catalysed reaction is 6-phospho-D-gluconate + NADP(+) = D-ribulose 5-phosphate + CO2 + NADPH. It participates in carbohydrate degradation; pentose phosphate pathway; D-ribulose 5-phosphate from D-glucose 6-phosphate (oxidative stage): step 3/3. In terms of biological role, catalyzes the oxidative decarboxylation of 6-phosphogluconate to ribulose 5-phosphate and CO(2), with concomitant reduction of NADP to NADPH. This is 6-phosphogluconate dehydrogenase, decarboxylating (gnd) from Chlamydia pneumoniae (Chlamydophila pneumoniae).